The chain runs to 144 residues: Interferon-induced transmembrane protein 2 (144 aa).

Position 1 is an N-acetylmethionine (M1). At 1–56 (MSHNSQAFLSTNAGLPPSYETIKEEYGVTELGEPSNSAVVRTTVINMPREVSVPDH) the chain is on the cytoplasmic side. Y19 carries the post-translational modification Phosphotyrosine. The segment at residues 57–77 (VVWSLFNTLFFNACCLGFVAY) is an intramembrane region (helical). Residues C70, C71, and C104 are each lipidated (S-palmitoyl cysteine). Over 78–110 (AYSVKSRDRKMVGDVVGAQAYASTAKCLNISSL) the chain is Cytoplasmic. Residues 111 to 131 (IFSILMVIICIIIFSTTSVVV) form a helical membrane-spanning segment. Residues 132 to 144 (FQSFAQRTPHSGF) are Extracellular-facing.

This sequence belongs to the CD225/Dispanin family. In terms of assembly, interacts with CD81. In terms of processing, palmitoylation on membrane-proximal cysteines controls clustering in membrane compartments and antiviral activity. Post-translationally, phosphorylation at Tyr-19 is required for endosomal and lysosomal location. As to expression, predominantly expressed in nascent primordial germ cells, as well as in gonadal germ cells.

The protein localises to the cell membrane. It is found in the lysosome membrane. It localises to the late endosome membrane. Its function is as follows. IFN-induced antiviral protein which inhibits the entry of viruses to the host cell cytoplasm, permitting endocytosis, but preventing subsequent viral fusion and release of viral contents into the cytosol. Active against multiple viruses, including influenza A virus, SARS coronavirus (SARS-CoV), Marburg virus (MARV) and Ebola virus (EBOV), Dengue virus (DNV) and West Nile virus (WNV). Can inhibit: influenza virus hemagglutinin protein-mediated viral entry, MARV and EBOV GP1,2-mediated viral entry and SARS-CoV S protein-mediated viral entry. Induces cell cycle arrest and mediates apoptosis by caspase activation and in p53-independent manner. In Mus musculus (Mouse), this protein is Interferon-induced transmembrane protein 2 (Ifitm2).